The following is a 177-amino-acid chain: MELILRADVENLGRLGDKVSVKPGYGRNYLIPQGLAMLATPANLRRFENESKKLQAKRDALIADAKGLADRLAEIAIVIEVRVGEGAKLYGSVTTAIIADKLAELGFDIDRKKIVLAEPIRSLGHYDVPVKLLPELRGSVKVSVVRQGGPEDEEIAEAAPVAEAQAEADGHSTEETA.

The interval 151–177 is disordered; sequence EDEEIAEAAPVAEAQAEADGHSTEETA. Residues 157–167 show a composition bias toward low complexity; that stretch reads EAAPVAEAQAE. Residues 168-177 are compositionally biased toward basic and acidic residues; sequence ADGHSTEETA.

It belongs to the bacterial ribosomal protein bL9 family.

Functionally, binds to the 23S rRNA. The sequence is that of Large ribosomal subunit protein bL9 from Solidesulfovibrio magneticus (strain ATCC 700980 / DSM 13731 / RS-1) (Desulfovibrio magneticus).